A 440-amino-acid chain; its full sequence is Proton extrusion protein PxcA (440 aa).

The next 4 membrane-spanning stretches (helical) occupy residues 222 to 242 (FVLTLIIVPLLAHQLTKTFFL), 316 to 336 (NAIANIFADIFSLVAFSLVLV), 352 to 374 (IVYGLSDSAKAFLIILFTDMFVG), and 400 to 420 (FNFLFIATFPVILDTVFKYWI).

The protein belongs to the CemA family.

It localises to the cell inner membrane. In terms of biological role, required for H(+) efflux immediately after light irradiation to form a rapid H(+) concentration gradient across the thylakoid membranes. Together with PxcL, contributes to transient H(+) uptake following dark to light transition. Involved in light-induced Na(+)-dependent proton extrusion. Also seems to be involved in CO(2) transport. The sequence is that of Proton extrusion protein PxcA from Synechocystis sp. (strain ATCC 27184 / PCC 6803 / Kazusa).